We begin with the raw amino-acid sequence, 87 residues long: DNA-directed RNA polymerase subunit omega (87 aa).

It belongs to the RNA polymerase subunit omega family. As to quaternary structure, the RNAP catalytic core consists of 2 alpha, 1 beta, 1 beta' and 1 omega subunit. When a sigma factor is associated with the core the holoenzyme is formed, which can initiate transcription.

It catalyses the reaction RNA(n) + a ribonucleoside 5'-triphosphate = RNA(n+1) + diphosphate. Functionally, promotes RNA polymerase assembly. Latches the N- and C-terminal regions of the beta' subunit thereby facilitating its interaction with the beta and alpha subunits. The sequence is that of DNA-directed RNA polymerase subunit omega from Pseudomonas entomophila (strain L48).